A 264-amino-acid chain; its full sequence is Putative hydroxypyruvate isomerase (264 aa).

Active-site proton donor/acceptor residues include E145 and E243.

The protein belongs to the hyi family.

The catalysed reaction is 3-hydroxypyruvate = 2-hydroxy-3-oxopropanoate. Catalyzes the reversible isomerization between hydroxypyruvate and 2-hydroxy-3-oxopropanoate (also termed tartronate semialdehyde). The sequence is that of Putative hydroxypyruvate isomerase (Gip) from Drosophila melanogaster (Fruit fly).